Here is a 141-residue protein sequence, read N- to C-terminus: Nucleoside diphosphate kinase (141 aa).

ATP contacts are provided by Lys11, Phe59, Arg87, Thr93, Arg104, and Asn114. The active-site Pros-phosphohistidine intermediate is His117.

Belongs to the NDK family. Homotetramer. The cofactor is Mg(2+).

It is found in the cytoplasm. The enzyme catalyses a 2'-deoxyribonucleoside 5'-diphosphate + ATP = a 2'-deoxyribonucleoside 5'-triphosphate + ADP. The catalysed reaction is a ribonucleoside 5'-diphosphate + ATP = a ribonucleoside 5'-triphosphate + ADP. Its function is as follows. Major role in the synthesis of nucleoside triphosphates other than ATP. The ATP gamma phosphate is transferred to the NDP beta phosphate via a ping-pong mechanism, using a phosphorylated active-site intermediate. The protein is Nucleoside diphosphate kinase of Pseudomonas fluorescens (strain Pf0-1).